Here is a 755-residue protein sequence, read N- to C-terminus: Exocyst complex component 3 (755 aa).

2 coiled-coil regions span residues 34 to 62 (DQLDKVEQYRRREARKKASVEARLKAAIQ) and 618 to 649 (RAVMQKRISFRSAEERKEGAEKMVREAEQLRF). Lysine 38 carries the post-translational modification N6-acetyllysine.

The protein belongs to the SEC6 family. As to quaternary structure, the exocyst complex is composed of EXOC1, EXOC2, EXOC3, EXOC4, EXOC5, EXOC6, EXOC7 and EXOC8. Interacts with EXOC3L1. Interacts with BIRC6/bruce. Interacts with MYRIP. Interacts with SLC6A9. As to expression, widely expressed, with highest levels in kidney, followed by brain (at protein level).

The protein resides in the cytoplasm. The protein localises to the perinuclear region. Its subcellular location is the cell projection. It is found in the growth cone. It localises to the neuron projection. The protein resides in the midbody. The protein localises to the golgi apparatus. Functionally, component of the exocyst complex involved in the docking of exocytic vesicles with fusion sites on the plasma membrane. This is Exocyst complex component 3 (Exoc3) from Rattus norvegicus (Rat).